The primary structure comprises 463 residues: MATSRLPAVPEEETTILMAKEELEALRTAFESGDIPQAASRLRELLATTETTRLEVGVTGESGAGKSSLINALRGVGAEDPGAALTGVVETTMQPSPYPHPQFPDVTLWDLPGAGSPGCSADKYLKEVDFGRYDFFLLVSPRRCGAVETRLASEILRQGKKFYFVRTKVDEDLAATRNQRPSGFSEAAVLQEIRDHCAERLRAAGLSDPRIFLVSNLSPNRYDFPMLVTTWEHDLPAHRRHAGLLSLPDISLEALQKKKDMLQEQVLKTALVSGVIQALPVPGLAAAYDDALLIRSLRGYHRSFGLDDDSLAKLAEQVGKQAGDLRSVIRSPLANEVSPETVLRLYSQSSDGAMRVARAFERGIPVFGTLVAGGISFGTVYTMLQGCLNEMAEDAQRVRIKALEEDETQGEVSLEAAGDNAVEKRSSGEGTSEEAPLSTRRKLGLLLKYILDSWKRRDLSEDK.

In terms of domain architecture, IRG-type G spans 52-234 (TRLEVGVTGE…PMLVTTWEHD (183 aa)). Residues 61–68 (ESGAGKSS), 86–90 (TGVVE), 168–170 (KVD), and 215–217 (SNL) contribute to the GTP site. A phosphoserine mark is found at serine 246 and serine 303. Residues 409–438 (QGEVSLEAAGDNAVEKRSSGEGTSEEAPLS) form a disordered region.

It belongs to the TRAFAC class dynamin-like GTPase superfamily. IRG family.

It is found in the cell projection. It localises to the cilium. The protein resides in the flagellum. The protein localises to the lipid droplet. It carries out the reaction GTP + H2O = GDP + phosphate + H(+). In terms of biological role, required for sperm motility and therefore male fertility, via positive regulation of spermatozoa fibrous sheath formation. In Rattus norvegicus (Rat), this protein is Interferon-inducible GTPase 5 (Irgc).